The following is a 342-amino-acid chain: Probable RNA methyltransferase PST_2231 (342 aa).

The active-site Proton acceptor is Glu91. A Radical SAM core domain is found at 94–320 (LLPRDGLCVS…TKVRNSAGQD (227 aa)). Residues Cys101 and Cys325 are joined by a disulfide bond. Residues Cys108, Cys112, and Cys115 each contribute to the [4Fe-4S] cluster site. Residues 153-154 (GE), Ser183, 206-208 (SLH), and Asn282 contribute to the S-adenosyl-L-methionine site. Cys325 acts as the S-methylcysteine intermediate in catalysis.

This sequence belongs to the radical SAM superfamily. RlmN family. It depends on [4Fe-4S] cluster as a cofactor.

It is found in the cytoplasm. This chain is Probable RNA methyltransferase PST_2231, found in Stutzerimonas stutzeri (strain A1501) (Pseudomonas stutzeri).